We begin with the raw amino-acid sequence, 826 residues long: Ribonucleases P/MRP protein subunit POP1 (826 aa).

Disordered stretches follow at residues 1–24 (MATTANGNSKKRDGGLSSLAPRKI) and 49–91 (NKDF…SGGD). A Nuclear localization signal motif is present at residues 58-65 (KRRRTNSY). Positions 70-79 (AKKRNIKRQK) are enriched in basic residues.

Component of nuclear RNase P and RNase MRP ribonucleoproteins. RNase P consists of a catalytic RNA moiety and different protein chains. Several subunits of RNase P are also part of the RNase MRP complex. RNase MRP consists of a catalytic RNA moiety and several protein subunits.

Its subcellular location is the nucleus. It localises to the nucleolus. Component of ribonuclease P, a ribonucleoprotein complex that generates mature tRNA molecules by cleaving their 5'-ends. Also a component of the MRP ribonuclease complex, which cleaves pre-rRNA sequences. Required for rRNA maturation, including 5.8S rRNA processing. In Arabidopsis thaliana (Mouse-ear cress), this protein is Ribonucleases P/MRP protein subunit POP1.